The primary structure comprises 37 residues: Large ribosomal subunit protein bL36 (37 aa).

The protein belongs to the bacterial ribosomal protein bL36 family.

In Nocardia farcinica (strain IFM 10152), this protein is Large ribosomal subunit protein bL36.